A 469-amino-acid chain; its full sequence is Collagenase 3 (469 aa).

Residues 1–17 (SSLSVLVLSLSFAYCLS) form the signal peptide. Positions 18 to 100 (APVPQDEDSE…QPRCGVPDVG (83 aa)) are cleaved as a propeptide — activation peptide. A Cysteine switch motif is present at residues 92-99 (PRCGVPDV). Cys94 contributes to the Zn(2+) binding site. Residue Asn115 is glycosylated (N-linked (GlcNAc...) asparagine). A Ca(2+)-binding site is contributed by Asp126. An N-linked (GlcNAc...) asparagine glycan is attached at Asn150. Asp160 contacts Ca(2+). Zn(2+) is bound by residues His170 and Asp172. 3 residues coordinate Ca(2+): Asp177, Gly178, and Leu182. Residue His185 participates in Zn(2+) binding. Ca(2+)-binding residues include Gly194 and Asp196. His198 contributes to the Zn(2+) binding site. 3 residues coordinate Ca(2+): Asp200, Asp201, and Glu203. Zn(2+) is bound at residue His220. Glu221 is an active-site residue. Zn(2+) contacts are provided by His224, His230, and Met238. Positions 266–469 (PGNRDPHPKH…ILKTNFVLMC (204 aa)) are interaction with collagen. 4 Hemopexin repeats span residues 279–328 (PEKC…WPEL), 329–375 (PNKL…GFPK), 377–425 (LKAI…FPGI), and 426–469 (GEKV…VLMC). Cys282 and Cys469 are disulfide-bonded. The Ca(2+) site is built by Asp289, Ile291, Asp333, Ala335, Ala383, and Asp430.

It belongs to the peptidase M10A family. The cofactor is Ca(2+). Requires Zn(2+) as cofactor. In terms of processing, the proenzyme is activated by removal of the propeptide; this cleavage can be effected by other matrix metalloproteinases and may involve several cleavage steps. Cleavage can also be autocatalytic, after partial maturation by another protease or after treatment with 4-aminophenylmercuric acetate (APMA) (in vitro).

The protein localises to the secreted. Its subcellular location is the extracellular space. It is found in the extracellular matrix. In terms of biological role, plays a role in the degradation of extracellular matrix proteins including fibrillar collagen, fibronectin, TNC and ACAN. Cleaves several types of triple helical collagen. May also function by activating or degrading key regulatory proteins. Plays a role in wound healing, tissue remodeling, cartilage degradation, bone development, bone mineralization and ossification. This Xenopus laevis (African clawed frog) protein is Collagenase 3 (mmp13).